The chain runs to 145 residues: Neuromedin-S (145 aa).

A signal peptide spans 1 to 27 (MRSEKHLPPLPLLLAICCLGTLHPSSG). 2 consecutive propeptides follow at residues 28–89 (FPQS…HEIY) and 92–117 (FLFQFSRTKDPSLKTGESQIATAEYT). Residue Asn-136 is modified to Asparagine amide. The propeptide occupies 140 to 145 (VSINEH).

Belongs to the NmU family. Expressed by the skin glands.

It localises to the secreted. Functionally, stimulates uterine smooth muscle contraction. Synthetic peptide NmS-17 induces calcium mobilization in CHO cells transfected with either human FM-3/GPR66 (EC(50)=0.085 nM) or FM-4/TGR-1 (EC(50)=0.231 nM) NmU/NmS receptors. The chain is Neuromedin-S (nms) from Bombina orientalis (Oriental fire-bellied toad).